The sequence spans 673 residues: Armadillo repeat-containing protein 8 (673 aa).

A2 bears the N-acetylalanine mark. ARM repeat units follow at residues 51 to 92, 95 to 134, 138 to 176, 178 to 217, 224 to 265, 269 to 309, 313 to 352, 374 to 413, 416 to 455, 458 to 497, 501 to 540, 543 to 585, 588 to 627, and 634 to 673; these read NKQK…SLAM, ENNVKSLLDCHIIPALLQGLLSPDLKFIEACLRCLRTIFT, TPEELLYTDATVIPHLMALLSRSRYTQEYICQIFSHCCK, PDHQTILFNHGAVQNIAHLLTSLSYKVRMQALKCFSVLAF, MTLV…YMCR, IRTD…YLIE, ELQRIASITDHLIAMLADYFKYPSSVSAITDIKRLDHDLK, DIRKKIIETENMMDRIVTGLSESSVKVRLAAVRCLHSLSR, QQLRTSFQDHAVWKPLMKVLQNAPDEILVVASSMLCNLLL, SPSKEPILESGAVELLCGLTQSENPALRVNGIWALMNMAF, QKIKADILRSLSTEQLFRLLSDSDLNVLMKTLGLLRNLLS, PHID…NIAD, TAKDLIMTNDDILQKIKYYMGHSHVKLQLAAMFCISNLIW, and QERQDKLRDMGIVDILHKLSQSPDSNLCDKAKMALQQYLA. Position 337 is a phosphoserine (S337). The residue at position 512 (S512) is a Phosphoserine.

As to quaternary structure, identified in the CTLH complex that contains GID4, RANBP9 and/or RANBP10, MKLN1, MAEA, RMND5A (or alternatively its paralog RMND5B), GID8, ARMC8, WDR26 and YPEL5. Within this complex, MAEA, RMND5A (or alternatively its paralog RMND5B), GID8, WDR26, and RANBP9 and/or RANBP10 form the catalytic core, while GID4, MKLN1, ARMC8 and YPEL5 have ancillary roles.

It localises to the nucleus. It is found in the cytoplasm. Functionally, component of the CTLH E3 ubiquitin-protein ligase complex that selectively accepts ubiquitin from UBE2H and mediates ubiquitination and subsequent proteasomal degradation of the transcription factor HBP1. The chain is Armadillo repeat-containing protein 8 (ARMC8) from Homo sapiens (Human).